Reading from the N-terminus, the 373-residue chain is Ca(2+)/H(+) antiporter (373 aa).

Helical transmembrane passes span 6–26, 29–49, 61–81, 94–114, 134–154, 162–182, 220–240, 249–269, 291–311, 318–338, and 349–369; these read TIFF…WLHW, VSIF…MGEA, LGGL…AFIA, ITGS…LLGG, MNLA…SNGI, LSVA…LFSM, FWLG…ELLV, SLGL…GNAA, VGST…AGWI, LDFN…ANSI, and GSLL…HPVV.

Belongs to the Ca(2+):cation antiporter (CaCA) (TC 2.A.19) family. Cation/proton exchanger (CAX) subfamily.

The protein resides in the cell inner membrane. Ca(+)/H(+) antiporter that extrudes calcium in exchange for external protons. Plays an important role in salt tolerance. Does not transport sodium or lithium. This is Ca(2+)/H(+) antiporter from Aphanothece halophytica.